Consider the following 168-residue polypeptide: Sperm acrosome-associated protein 9 (168 aa).

As to quaternary structure, microtubule inner protein component of sperm flagellar doublet microtubules. Interacts with CABP1 and CALR. Interacts with INCA1. Interacts with microtubules. Testis-specific. Expressed in round spermatids.

The protein localises to the cytoplasm. Its subcellular location is the cytoplasmic vesicle. It localises to the secretory vesicle. It is found in the acrosome. The protein resides in the cytoskeleton. The protein localises to the cilium basal body. Its subcellular location is the flagellum axoneme. It localises to the cilium axoneme. It is found in the nucleus. Its function is as follows. Microtubule inner protein (MIP) part of the dynein-decorated doublet microtubules (DMTs) of multiciliated respiratory cells and the distal singlet microtubules of monoflagellated spermatozoa. Forms an extensive interaction network cross-linking the lumen of axonemal doublet microtubules. The chain is Sperm acrosome-associated protein 9 (Spaca9) from Rattus norvegicus (Rat).